Here is a 388-residue protein sequence, read N- to C-terminus: 3-sulfinopropanoyl-CoA desulfinase (388 aa).

FAD-binding positions include 121-124, S130, and 153-156; these read ICIT and HWIT. 240–241 is a substrate binding site; it reads YN. FAD contacts are provided by residues R269, Q336, 363-367, and Q384; that span reads GGTAQ.

This sequence belongs to the acyl-CoA dehydrogenase family. Homotrimer or homotetramer. FAD is required as a cofactor.

It carries out the reaction 3-sulfinopropanoyl-CoA + H2O = propanoyl-CoA + sulfite + H(+). Catalyzes the conversion 3-sulfinopropanoyl-CoA (3SP-CoA) to propanoyl-CoA by abstraction of sulfite. Does not show dehydrogenase activity. This Paraburkholderia xenovorans (strain LB400) protein is 3-sulfinopropanoyl-CoA desulfinase.